We begin with the raw amino-acid sequence, 512 residues long: Inosine-5'-monophosphate dehydrogenase (512 aa).

CBS domains are found at residues 110–169 (FIMK…SAPV) and 173–231 (MTRR…PNSS). Residues 268 to 270 (DSS) and 318 to 320 (GMG) each bind NAD(+). Residues Gly-320 and Gly-322 each coordinate K(+). Ser-323 provides a ligand contact to IMP. Cys-325 contributes to the K(+) binding site. Cys-325 acts as the Thioimidate intermediate in catalysis. Residues 358–360 (DGG), 381–382 (GS), and 405–409 (YRGMG) contribute to the IMP site. Arg-423 serves as the catalytic Proton acceptor. Position 435 (Gln-435) interacts with IMP. Residues Glu-494 and Gly-495 each coordinate K(+). Residues 510-512 (SKL) carry the Microbody targeting signal motif.

Belongs to the IMPDH/GMPR family. As to quaternary structure, homotetramer. K(+) serves as cofactor.

It localises to the glycosome. It catalyses the reaction IMP + NAD(+) + H2O = XMP + NADH + H(+). The protein operates within purine metabolism; XMP biosynthesis via de novo pathway; XMP from IMP: step 1/1. Mycophenolic acid (MPA) is a non-competitive inhibitor that prevents formation of the closed enzyme conformation by binding to the same site as the amobile flap. In contrast, mizoribine monophosphate (MZP) is a competitive inhibitor that induces the closed conformation. MPA is a potent inhibitor of mammalian IMPDHs but a poor inhibitor of the bacterial enzymes. MZP is a more potent inhibitor of bacterial IMPDH. Catalyzes the conversion of inosine 5'-phosphate (IMP) to xanthosine 5'-phosphate (XMP), the first committed and rate-limiting step in the de novo synthesis of guanine nucleotides, and therefore plays an important role in the regulation of cell growth. In Trypanosoma brucei brucei, this protein is Inosine-5'-monophosphate dehydrogenase.